A 158-amino-acid chain; its full sequence is MIRIGHGFDVHKFGGEGPVIIGGVAVPYEQGLIAHSDGDVALHALSDALLGAIAAGDIGRHFPDTDDKWKGVDSRELLKDVYRRVKEQGYKLGNADVTIIAQAPKMAPYIDAMREAIAHDLETDIRNINVKATTTERLGFTGRKEGIATEAVVLLIKQ.

A divalent metal cation is bound by residues aspartate 9 and histidine 11. 4-CDP-2-C-methyl-D-erythritol 2-phosphate is bound by residues 9–11 and 35–36; these read DVH and HS. Histidine 43 is an a divalent metal cation binding site. 4-CDP-2-C-methyl-D-erythritol 2-phosphate-binding positions include 57-59, 62-66, 101-107, 133-136, phenylalanine 140, and arginine 143; these read DIG, FPDTD, AQAPKMA, and TTTE.

It belongs to the IspF family. Homotrimer. The cofactor is a divalent metal cation.

It carries out the reaction 4-CDP-2-C-methyl-D-erythritol 2-phosphate = 2-C-methyl-D-erythritol 2,4-cyclic diphosphate + CMP. It functions in the pathway isoprenoid biosynthesis; isopentenyl diphosphate biosynthesis via DXP pathway; isopentenyl diphosphate from 1-deoxy-D-xylulose 5-phosphate: step 4/6. In terms of biological role, involved in the biosynthesis of isopentenyl diphosphate (IPP) and dimethylallyl diphosphate (DMAPP), two major building blocks of isoprenoid compounds. Catalyzes the conversion of 4-diphosphocytidyl-2-C-methyl-D-erythritol 2-phosphate (CDP-ME2P) to 2-C-methyl-D-erythritol 2,4-cyclodiphosphate (ME-CPP) with a corresponding release of cytidine 5-monophosphate (CMP). The polypeptide is 2-C-methyl-D-erythritol 2,4-cyclodiphosphate synthase (Vibrio vulnificus (strain CMCP6)).